The following is a 242-amino-acid chain: tRNA (guanine-N(1)-)-methyltransferase (242 aa).

S-adenosyl-L-methionine contacts are provided by residues Gly-111 and 130-135; that span reads IGDYVL.

This sequence belongs to the RNA methyltransferase TrmD family. Homodimer.

Its subcellular location is the cytoplasm. The catalysed reaction is guanosine(37) in tRNA + S-adenosyl-L-methionine = N(1)-methylguanosine(37) in tRNA + S-adenosyl-L-homocysteine + H(+). Specifically methylates guanosine-37 in various tRNAs. The sequence is that of tRNA (guanine-N(1)-)-methyltransferase from Onion yellows phytoplasma (strain OY-M).